Reading from the N-terminus, the 257-residue chain is Imidazole glycerol phosphate synthase subunit HisF (257 aa).

Catalysis depends on residues aspartate 12 and aspartate 131.

It belongs to the HisA/HisF family. As to quaternary structure, heterodimer of HisH and HisF.

The protein localises to the cytoplasm. It carries out the reaction 5-[(5-phospho-1-deoxy-D-ribulos-1-ylimino)methylamino]-1-(5-phospho-beta-D-ribosyl)imidazole-4-carboxamide + L-glutamine = D-erythro-1-(imidazol-4-yl)glycerol 3-phosphate + 5-amino-1-(5-phospho-beta-D-ribosyl)imidazole-4-carboxamide + L-glutamate + H(+). It participates in amino-acid biosynthesis; L-histidine biosynthesis; L-histidine from 5-phospho-alpha-D-ribose 1-diphosphate: step 5/9. Its function is as follows. IGPS catalyzes the conversion of PRFAR and glutamine to IGP, AICAR and glutamate. The HisF subunit catalyzes the cyclization activity that produces IGP and AICAR from PRFAR using the ammonia provided by the HisH subunit. The chain is Imidazole glycerol phosphate synthase subunit HisF from Hydrogenovibrio crunogenus (strain DSM 25203 / XCL-2) (Thiomicrospira crunogena).